The sequence spans 412 residues: MVSYSNNHFAYAFLLLLTIGNTLAFSSSLPDHVQDPNLVVDDVNRSVFNASRRSLAYLSCRTGNPIDDCWRCDPNWETNRQRLADCAIGFGKNAIGGRKGRIYVVTDPANDDPVNPRPGTLRYAVTQEEPLWIIFKRDMVIRLKKELIITSFKTIDGRGSSVHITDGPCLKIHYATNIIIHGINIHDCKPGSGGMIKDGPHHTGWWMQSDGDAVAIFGGKHVWIDHCSLSNCDDGLIDAIHGSTAITISNNHMTHHDKVMLLGHSDSYTQDKNMQVTIAFNHFGEGLVQRMPRCRHGYFHVVNNDYTHWEMYAIGGSASPTIYSQGNRFLAPNTRFNKEVTKHEDAPESKWRDWNWRSEGDMLLNGAYFRESGAEAPSTYARASSLSARPSSLVGSITTTAGTLSCRRGRRC.

The N-terminal stretch at 1 to 24 (MVSYSNNHFAYAFLLLLTIGNTLA) is a signal peptide. Ca(2+)-binding residues include aspartate 210, aspartate 234, and aspartate 238. Arginine 290 is an active-site residue.

This sequence belongs to the polysaccharide lyase 1 family. Ca(2+) serves as cofactor.

The catalysed reaction is Eliminative cleavage of (1-&gt;4)-alpha-D-galacturonan to give oligosaccharides with 4-deoxy-alpha-D-galact-4-enuronosyl groups at their non-reducing ends.. It functions in the pathway glycan metabolism; pectin degradation; 2-dehydro-3-deoxy-D-gluconate from pectin: step 2/5. This is Putative pectate lyase 11 from Arabidopsis thaliana (Mouse-ear cress).